Here is a 431-residue protein sequence, read N- to C-terminus: Homeobox protein knotted-1-like 3 (431 aa).

A disordered region spans residues 15–47 (NHFTDQHQPPPPQPPPPPPQQQQHFQEAPPPNW). Residues 22-34 (QPPPPQPPPPPPQ) are compositionally biased toward pro residues. The 21-residue stretch at 322–342 (ELKHELKQGYKEKIVDIREEI) folds into the ELK domain. The homeobox; TALE-type DNA-binding region spans 343 to 406 (LRKRRAGKLP…NQRKRNWHSN (64 aa)). The disordered stretch occupies residues 402–431 (NWHSNPSSSTVLKNKRKSNAGDNSGRERFA). The span at 404-413 (HSNPSSSTVL) shows a compositional bias: polar residues.

Belongs to the TALE/KNOX homeobox family. May form heterodimeric complex with the TALE/BELL proteins. Interacts with OFP1, OFP2, OFP4, OFP12 and OFP14. Interacts with KNATM-B.

The protein resides in the nucleus. The protein is Homeobox protein knotted-1-like 3 (KNAT3) of Arabidopsis thaliana (Mouse-ear cress).